The following is a 203-amino-acid chain: Holliday junction branch migration complex subunit RuvA (203 aa).

The segment at 1–64 (MIGRLRGIII…EDAQLLYGFN (64 aa)) is domain I. Positions 65 to 142 (NKQERTLFKE…KGLHGDLFTP (78 aa)) are domain II. The segment at 143 to 154 (AADLVLTSPASP) is flexible linker. The interval 155-203 (ATNDAEQEAVAALVALGYKPQEASRMVSKIARPDASSETLIREALRAAL) is domain III.

It belongs to the RuvA family. As to quaternary structure, homotetramer. Forms an RuvA(8)-RuvB(12)-Holliday junction (HJ) complex. HJ DNA is sandwiched between 2 RuvA tetramers; dsDNA enters through RuvA and exits via RuvB. An RuvB hexamer assembles on each DNA strand where it exits the tetramer. Each RuvB hexamer is contacted by two RuvA subunits (via domain III) on 2 adjacent RuvB subunits; this complex drives branch migration. In the full resolvosome a probable DNA-RuvA(4)-RuvB(12)-RuvC(2) complex forms which resolves the HJ.

It localises to the cytoplasm. Its function is as follows. The RuvA-RuvB-RuvC complex processes Holliday junction (HJ) DNA during genetic recombination and DNA repair, while the RuvA-RuvB complex plays an important role in the rescue of blocked DNA replication forks via replication fork reversal (RFR). RuvA specifically binds to HJ cruciform DNA, conferring on it an open structure. The RuvB hexamer acts as an ATP-dependent pump, pulling dsDNA into and through the RuvAB complex. HJ branch migration allows RuvC to scan DNA until it finds its consensus sequence, where it cleaves and resolves the cruciform DNA. In Escherichia coli O9:H4 (strain HS), this protein is Holliday junction branch migration complex subunit RuvA.